A 481-amino-acid chain; its full sequence is Zinc finger CCCH domain-containing protein 4 (481 aa).

The C3H1-type zinc finger occupies 157–184; the sequence is RNRAHVCSFFIRGECTRGAECPYRHEMP. Residues 228–301 form the RRM domain; the sequence is KTLYVGGLNS…QRLKLTWGRP (74 aa). Residues 329-481 form a disordered region; sequence HNQPPPMQQY…DVSTATGSSQ (153 aa). Positions 331–345 are enriched in pro residues; sequence QPPPMQQYYMHPPPA. Composition is skewed to low complexity over residues 369 to 389 and 399 to 410; these read AGGS…MPPH and YMPSPYQQQYPP. A compositionally biased stretch (pro residues) spans 423–444; sequence APPPAAYPYPQQPGPGSRPAPS. Positions 449–471 are enriched in low complexity; the sequence is SAISPDSAPAGSGAPSGSSQQAP. A compositionally biased stretch (polar residues) spans 472 to 481; the sequence is DVSTATGSSQ.

This Arabidopsis thaliana (Mouse-ear cress) protein is Zinc finger CCCH domain-containing protein 4.